A 582-amino-acid polypeptide reads, in one-letter code: mRNA-decapping enzyme 1A (582 aa).

S62 bears the Phosphoserine mark. Residues 132–141 (RSQQAARDKQ) show a composition bias toward basic and acidic residues. Disordered regions lie at residues 132 to 154 (RSQQ…DHRP) and 172 to 214 (QMGD…PSGH). S142, S179, S180, S315, S319, and S334 each carry phosphoserine. The segment covering 173–196 (MGDSNISSPGLQPSTQLSNLGSTE) has biased composition (polar residues). A Phosphothreonine modification is found at T348. S353 bears the Phosphoserine mark. The residue at position 376 (R376) is an Asymmetric dimethylarginine. T401 is modified (phosphothreonine). 4 positions are modified to phosphoserine: S422, S522, S523, and S525. Positions 513–536 (RSSDLERKASSPSPLTIGTPESQR) are disordered. A compositionally biased stretch (polar residues) spans 522 to 533 (SSPSPLTIGTPE). Phosphothreonine occurs at positions 528 and 531.

Belongs to the DCP1 family. As to quaternary structure, (Microbial infection) Interacts with rotavirus A non-structural protein 2; this interaction probably plays a role in the sequestration of DCP1A in viral factories. Interacts with rotavirus A non-structural protein 5; this interaction probably plays a role in its sequestration in viral factories. In terms of assembly, forms a complex with EDC3, DCP2, DDX6 and EDC4/HEDLS, within this complex directly interacts with EDC3. Part of a cytoplasmic complex containing proteins involved in mRNA decay, including XRN1 and LSM1. Interacts with DCP1B. Interacts with DCP2. Interacts with DDX17 in an RNA-independent manner. Interacts with PNRC2. Interacts with SMAD4. Interacts with UPF1. Interacts with ZC3HAV1. Interacts with ZFP36L1. Interacts with NBDY. Interacts with DHX34; the interaction is RNA-independent. Detected in heart, brain, placenta, lung, skeletal muscle, liver, kidney and pancreas.

It localises to the cytoplasm. Its subcellular location is the P-body. It is found in the nucleus. It catalyses the reaction a 5'-end (N(7)-methyl 5'-triphosphoguanosine)-ribonucleoside in mRNA + H2O = N(7)-methyl-GDP + a 5'-end phospho-ribonucleoside in mRNA + 2 H(+). In terms of biological role, necessary for the degradation of mRNAs, both in normal mRNA turnover and in nonsense-mediated mRNA decay. Removes the 7-methyl guanine cap structure from mRNA molecules, yielding a 5'-phosphorylated mRNA fragment and 7m-GDP. Contributes to the transactivation of target genes after stimulation by TGFB1. Essential for embryonic development. The sequence is that of mRNA-decapping enzyme 1A (DCP1A) from Homo sapiens (Human).